We begin with the raw amino-acid sequence, 212 residues long: MADEKNKRWQELADVKRELAQRDWFYGTSGNLSIKVSDDPITFLVTASGKDKRKETDEDFVLVNAAGNPVDPDVPLRPSAETQLHTYVYERTNAGCCLHVHTIDNNVISELYGDKGEIRFKGNEIIKALGYWEEDAEVSLPIIENPAHIPHLAAQFAKHLTEESESGAVLIRNHGITVWGKTASEAKRVLEAYEFLFSYYLKLTLYQKQLVT.

His99 and His101 together coordinate Zn(2+).

Belongs to the aldolase class II family. MtnB subfamily. Homotetramer. Zn(2+) is required as a cofactor.

It carries out the reaction 5-(methylsulfanyl)-D-ribulose 1-phosphate = 5-methylsulfanyl-2,3-dioxopentyl phosphate + H2O. Its pathway is amino-acid biosynthesis; L-methionine biosynthesis via salvage pathway; L-methionine from S-methyl-5-thio-alpha-D-ribose 1-phosphate: step 2/6. Functionally, catalyzes the dehydration of methylthioribulose-1-phosphate (MTRu-1-P) into 2,3-diketo-5-methylthiopentyl-1-phosphate (DK-MTP-1-P). The protein is Methylthioribulose-1-phosphate dehydratase of Bacillus pumilus (strain SAFR-032).